The following is a 373-amino-acid chain: Protodeoxyviolaceinate monooxygenase (373 aa).

Position 2–20 (2–20) interacts with FAD; it reads KILVIGAGPAGLVFASQLK.

FAD is required as a cofactor.

It catalyses the reaction protodeoxyviolaceinate + NADH + O2 + H(+) = protoviolaceinate + NAD(+) + H2O. The enzyme catalyses protodeoxyviolaceinate + NADPH + O2 + H(+) = protoviolaceinate + NADP(+) + H2O. Its pathway is pigment biosynthesis; violacein biosynthesis. Functionally, catalyzes the oxygenation of the 6-position of protodeoxyviolaceinate to form proviolacein. The sequence is that of Protodeoxyviolaceinate monooxygenase (vioD) from Chromobacterium violaceum (strain ATCC 12472 / DSM 30191 / JCM 1249 / CCUG 213 / NBRC 12614 / NCIMB 9131 / NCTC 9757 / MK).